The sequence spans 66 residues: Protein I177L (66 aa).

The protein belongs to the asfivirus I177L family.

Its subcellular location is the virion. In Ornithodoros (relapsing fever ticks), this protein is Protein I177L.